Reading from the N-terminus, the 247-residue chain is tRNA pseudouridine synthase A 1 (247 aa).

Asp53 (nucleophile) is an active-site residue. Tyr111 provides a ligand contact to substrate.

It belongs to the tRNA pseudouridine synthase TruA family. Homodimer.

The catalysed reaction is uridine(38/39/40) in tRNA = pseudouridine(38/39/40) in tRNA. Its function is as follows. Formation of pseudouridine at positions 38, 39 and 40 in the anticodon stem and loop of transfer RNAs. This is tRNA pseudouridine synthase A 1 from Bacillus cereus (strain ATCC 10987 / NRS 248).